The following is a 151-amino-acid chain: Deoxyuridine 5'-triphosphate nucleotidohydrolase (151 aa).

Residues 70–72, asparagine 83, 87–89, and methionine 97 contribute to the substrate site; these read RSG and LID.

This sequence belongs to the dUTPase family. In terms of assembly, homotrimer. The cofactor is Mg(2+).

It carries out the reaction dUTP + H2O = dUMP + diphosphate + H(+). It participates in pyrimidine metabolism; dUMP biosynthesis; dUMP from dCTP (dUTP route): step 2/2. Its function is as follows. This enzyme is involved in nucleotide metabolism: it produces dUMP, the immediate precursor of thymidine nucleotides and it decreases the intracellular concentration of dUTP so that uracil cannot be incorporated into DNA. This chain is Deoxyuridine 5'-triphosphate nucleotidohydrolase, found in Escherichia coli (strain K12 / MC4100 / BW2952).